Consider the following 270-residue polypeptide: Tryptophan synthase alpha chain (270 aa).

Residues glutamate 57 and aspartate 68 each act as proton acceptor in the active site.

It belongs to the TrpA family. In terms of assembly, tetramer of two alpha and two beta chains.

The catalysed reaction is (1S,2R)-1-C-(indol-3-yl)glycerol 3-phosphate + L-serine = D-glyceraldehyde 3-phosphate + L-tryptophan + H2O. It participates in amino-acid biosynthesis; L-tryptophan biosynthesis; L-tryptophan from chorismate: step 5/5. Functionally, the alpha subunit is responsible for the aldol cleavage of indoleglycerol phosphate to indole and glyceraldehyde 3-phosphate. The polypeptide is Tryptophan synthase alpha chain (Mycobacterium bovis (strain ATCC BAA-935 / AF2122/97)).